A 245-amino-acid chain; its full sequence is Complement C1q subcomponent subunit A (245 aa).

The signal sequence occupies residues 1-22 (METSQGWLVACVLAVTLVWTVA). A Collagen-like domain is found at 31-109 (GKDGVAGIPG…KGVKGNPGNI (79 aa)). The interval 35 to 111 (VAGIPGRPGR…VKGNPGNIRD (77 aa)) is disordered. 4-hydroxyproline is present on residues Pro-39 and Pro-45. At Lys-48 the chain carries 5-hydroxylysine. Residue Lys-48 is glycosylated (O-linked (Gal...) hydroxylysine). Residue Pro-54 is modified to 4-hydroxyproline. 5-hydroxylysine is present on Lys-67. The O-linked (Gal...) hydroxylysine glycan is linked to Lys-67. Pro-79 and Pro-85 each carry 4-hydroxyproline. Lys-100 carries the post-translational modification 5-hydroxylysine. Residue Lys-100 is glycosylated (O-linked (Gal...) hydroxylysine). In terms of domain architecture, C1q spans 110–245 (RDQPRPAFSA…FSGFLIFPSA (136 aa)). Asn-146 is a glycosylation site (N-linked (GlcNAc...) asparagine). A disulfide bridge links Cys-172 with Cys-190. Gln-199 serves as a coordination point for Ca(2+).

Core component of the complement C1 complex, a calcium-dependent complex composed of 1 molecule of the C1Q subcomplex, 2 molecules of C1R and 2 molecules of C1S. The C1Q subcomplex is composed 18 subunits: 3 chains of C1QA, C1QB, and C1QC trimerize to form 6 collagen-like triple helices connected to six globular ligand-recognition modules (C1q domain). Interacts with CR1 (via Sushi 24 and Sushi 25 domains). Interacts (via C-terminus) with CD33; this interaction activates CD33 inhibitory motifs. O-linked glycans are assumed to be the Glc-Gal disaccharides typically found as secondary modifications of hydroxylated lysines in collagen-like domains.

Its subcellular location is the secreted. The protein localises to the cell surface. Its activity is regulated as follows. The C1Q subcomplex is inhibited by sulfated molecules, such as triterpenoid sulfates, heparan sulfate, or chondroitin sulfates. Core component of the complement C1 complex, a multiprotein complex that initiates the classical pathway of the complement system, a cascade of proteins that leads to phagocytosis and breakdown of pathogens and signaling that strengthens the adaptive immune system. The classical complement pathway is initiated by the C1Q subcomplex of the C1 complex, which specifically binds IgG or IgM immunoglobulins complexed with antigens, forming antigen-antibody complexes on the surface of pathogens: C1QA, together with C1QB and C1QC, specifically recognizes and binds the Fc regions of IgG or IgM via its C1q domain. Immunoglobulin-binding activates the proenzyme C1R, which cleaves C1S, initiating the proteolytic cascade of the complement system. The C1Q subcomplex is activated by a hexamer of IgG complexed with antigens, while it is activated by a pentameric IgM. The C1Q subcomplex also recognizes and binds phosphatidylserine exposed on the surface of cells undergoing programmed cell death, possibly promoting activation of the complement system. In Rattus norvegicus (Rat), this protein is Complement C1q subcomponent subunit A.